A 177-amino-acid chain; its full sequence is Embryogenesis-like protein (177 aa).

Residues V98–A118 adopt a coiled-coil conformation.

As to quaternary structure, interacts with HAG1/GCN5. In terms of tissue distribution, expressed in flowers, leaves, stems and siliques.

The protein localises to the nucleus. Its function is as follows. Activates gene expression by recruiting HAG1/GCN5 and triggering subsequent histone H3 acetylation of target genes promoters. The chain is Embryogenesis-like protein from Arabidopsis thaliana (Mouse-ear cress).